The following is a 115-amino-acid chain: Meromycolate extension acyl carrier protein (115 aa).

The Carrier domain occupies 3 to 81 (VTQEEIIAGI…DVVAYIQKLE (79 aa)). The residue at position 41 (S41) is an O-(pantetheine 4'-phosphoryl)serine.

The protein belongs to the acyl carrier protein (ACP) family. 4'-phosphopantetheine is transferred from CoA to a specific serine of apo-AcpM.

The protein resides in the cytoplasm. Its function is as follows. Acyl carrier protein involved in meromycolate extension. The chain is Meromycolate extension acyl carrier protein (acpM) from Mycobacterium bovis (strain ATCC BAA-935 / AF2122/97).